The primary structure comprises 795 residues: Phenylalanine--tRNA ligase beta subunit (795 aa).

The region spanning 39 to 148 is the tRNA-binding domain; it reads AGEFTGVKVG…EGTTLGADVR (110 aa). Residues 401-476 form the B5 domain; that stretch reads PKANTVELRR…RIYGYNNIPN (76 aa). Residues Asp454, Asp460, Glu463, and Glu464 each coordinate Mg(2+). The FDX-ACB domain maps to 701–794; it reads SKFPANRRDI…IGEKFSATLR (94 aa).

Belongs to the phenylalanyl-tRNA synthetase beta subunit family. Type 1 subfamily. Tetramer of two alpha and two beta subunits. Mg(2+) serves as cofactor.

The protein localises to the cytoplasm. The catalysed reaction is tRNA(Phe) + L-phenylalanine + ATP = L-phenylalanyl-tRNA(Phe) + AMP + diphosphate + H(+). The chain is Phenylalanine--tRNA ligase beta subunit from Aliivibrio fischeri (strain ATCC 700601 / ES114) (Vibrio fischeri).